Reading from the N-terminus, the 342-residue chain is Phenylalanine--tRNA ligase alpha subunit (342 aa).

Residue Glu-260 participates in Mg(2+) binding.

This sequence belongs to the class-II aminoacyl-tRNA synthetase family. Phe-tRNA synthetase alpha subunit type 1 subfamily. As to quaternary structure, tetramer of two alpha and two beta subunits. Mg(2+) is required as a cofactor.

Its subcellular location is the cytoplasm. The catalysed reaction is tRNA(Phe) + L-phenylalanine + ATP = L-phenylalanyl-tRNA(Phe) + AMP + diphosphate + H(+). The sequence is that of Phenylalanine--tRNA ligase alpha subunit from Mycobacterium avium (strain 104).